The sequence spans 280 residues: Transmembrane protein 45B (280 aa).

The next 7 membrane-spanning stretches (helical) occupy residues 7–27 (HALPGSFFLVFGLWWSVKYPL), 49–69 (LIEGILKAAFALIGILAEQFV), 96–116 (MYLFYGISGVVDILTFLPLNL), 120–140 (LDRLSLGIAVIIEGLLFYYHV), 150–170 (IHSLLLIAVFGGAISIMIEVF), 184–204 (LTILQGTWFWQIGFVLYPLGG), and 216–236 (VMFITMCFCWHYAVALLIMAI).

The protein belongs to the TMEM45 family.

It localises to the membrane. This is Transmembrane protein 45B (tmem45b) from Xenopus tropicalis (Western clawed frog).